The sequence spans 272 residues: AA9 family lytic polysaccharide monooxygenase G (272 aa).

An N-terminal signal peptide occupies residues 1–22; sequence MKGAGSASFLLTLLSTITRTSA. His23 is a Cu(2+) binding site. Asn60 is a glycosylation site (N-linked (GlcNAc...) asparagine). 2 disulfide bridges follow: Cys78-Cys202 and Cys121-Cys125. Residue His110 participates in Cu(2+) binding. 2 residues coordinate O2: His188 and Gln197. Cu(2+) is bound at residue Tyr199.

This sequence belongs to the polysaccharide monooxygenase AA9 family. Cu(2+) serves as cofactor.

Its subcellular location is the secreted. The catalysed reaction is [(1-&gt;4)-beta-D-glucosyl]n+m + reduced acceptor + O2 = 4-dehydro-beta-D-glucosyl-[(1-&gt;4)-beta-D-glucosyl]n-1 + [(1-&gt;4)-beta-D-glucosyl]m + acceptor + H2O.. Its function is as follows. Lytic polysaccharide monooxygenase (LPMO) that depolymerizes crystalline and amorphous polysaccharides via the oxidation of scissile alpha- or beta-(1-4)-glycosidic bonds, yielding C1 or C4 oxidation products. Catalysis by LPMOs requires the reduction of the active-site copper from Cu(II) to Cu(I) by a reducing agent and H(2)O(2) or O(2) as a cosubstrate. Acts preferentially on crystalline regions of cellulose such as highly crystalline algae cellulose. The chain is AA9 family lytic polysaccharide monooxygenase G from Emericella nidulans (strain FGSC A4 / ATCC 38163 / CBS 112.46 / NRRL 194 / M139) (Aspergillus nidulans).